Here is a 353-residue protein sequence, read N- to C-terminus: UPF0283 membrane protein YcjF (353 aa).

The segment covering M1–P19 has biased composition (basic and acidic residues). Positions M1–R35 are disordered. 3 helical membrane passes run M70–T90, V100–V120, and E213–W233.

It belongs to the UPF0283 family.

It is found in the cell inner membrane. The protein is UPF0283 membrane protein YcjF of Salmonella paratyphi C (strain RKS4594).